A 364-amino-acid chain; its full sequence is Geissoschizine synthase (364 aa).

Zn(2+) is bound at residue Cys-51. Asn-52 serves as a coordination point for NADP(+). His-73, Glu-74, Cys-104, Cys-107, Cys-110, Cys-118, and Cys-168 together coordinate Zn(2+). NADP(+)-binding residues include Leu-194, Gly-196, Leu-197, Ser-216, Thr-217, Ser-218, Lys-221, Arg-261, Val-280, Ala-282, Ser-304, Thr-306, and Arg-351.

Belongs to the zinc-containing alcohol dehydrogenase family. Class-III subfamily. In terms of assembly, homodimer. It depends on Zn(2+) as a cofactor. In terms of tissue distribution, expressed in leaf epidermis.

The catalysed reaction is (19E)-geissoschizine + NADP(+) = 4,21-dehydrogeissoschizine + NADPH. The protein operates within alkaloid biosynthesis. Functionally, component of the seco-iridoid and derivatives monoterpenoid indole alkaloids (MIAs, e.g. catharanthine, tabersonine, vincadifformine, vindoline, vincristine, quinine and strychnine) biosynthesis pathway. During the conversion of strictosidine aglycone to geissoschizine, catalyzes iminium reduction on 4,21-dehydrogeissoschizine to produce 19E-geissoschizine, precursor of catharanthine and tabersonine derivatives. May also trigger the production of reactive intermediate used by the HL1, HL2, HL3 and HL4 to form catharanthine, vincadifformine and tabersonine. The protein is Geissoschizine synthase of Catharanthus roseus (Madagascar periwinkle).